A 226-amino-acid chain; its full sequence is Probable septum site-determining protein MinC (226 aa).

This sequence belongs to the MinC family. As to quaternary structure, interacts with MinD and FtsZ.

Cell division inhibitor that blocks the formation of polar Z ring septums. Rapidly oscillates between the poles of the cell to destabilize FtsZ filaments that have formed before they mature into polar Z rings. Prevents FtsZ polymerization. The chain is Probable septum site-determining protein MinC from Edwardsiella ictaluri (strain 93-146).